We begin with the raw amino-acid sequence, 1381 residues long: DNA-directed RNA polymerase subunit beta (1381 aa).

It belongs to the RNA polymerase beta chain family. As to quaternary structure, the RNAP catalytic core consists of 2 alpha, 1 beta, 1 beta' and 1 omega subunit. When a sigma factor is associated with the core the holoenzyme is formed, which can initiate transcription.

The catalysed reaction is RNA(n) + a ribonucleoside 5'-triphosphate = RNA(n+1) + diphosphate. In terms of biological role, DNA-dependent RNA polymerase catalyzes the transcription of DNA into RNA using the four ribonucleoside triphosphates as substrates. The sequence is that of DNA-directed RNA polymerase subunit beta from Sulfurimonas denitrificans (strain ATCC 33889 / DSM 1251) (Thiomicrospira denitrificans (strain ATCC 33889 / DSM 1251)).